The sequence spans 39 residues: Photosystem I reaction center subunit IX (39 aa).

The helical transmembrane segment at 7–27 threads the bilayer; the sequence is FLTTAPVAFILFSSFVFALFI.

The protein belongs to the PsaJ family.

The protein resides in the cellular thylakoid membrane. Its function is as follows. May help in the organization of the PsaE and PsaF subunits. In Synechococcus sp. (strain JA-3-3Ab) (Cyanobacteria bacterium Yellowstone A-Prime), this protein is Photosystem I reaction center subunit IX.